A 237-amino-acid polypeptide reads, in one-letter code: Ribonuclease 3 (237 aa).

Residues 8-134 (RSALLEKLGV…VIGAVYLDAG (127 aa)) form the RNase III domain. Residue Glu47 participates in Mg(2+) binding. Asp51 is an active-site residue. Mg(2+) contacts are provided by Asp120 and Glu123. Glu123 is an active-site residue. The DRBM domain occupies 161 to 229 (DPKTSLQEAA…ALSAWTALTN (69 aa)).

The protein belongs to the ribonuclease III family. In terms of assembly, homodimer. Mg(2+) serves as cofactor.

The protein resides in the cytoplasm. It carries out the reaction Endonucleolytic cleavage to 5'-phosphomonoester.. In terms of biological role, digests double-stranded RNA. Involved in the processing of primary rRNA transcript to yield the immediate precursors to the large and small rRNAs (23S and 16S). Processes some mRNAs, and tRNAs when they are encoded in the rRNA operon. Processes pre-crRNA and tracrRNA of type II CRISPR loci if present in the organism. In Leifsonia xyli subsp. xyli (strain CTCB07), this protein is Ribonuclease 3.